The following is a 746-amino-acid chain: NAD(P)H-quinone oxidoreductase subunit 5, chloroplastic (746 aa).

16 helical membrane-spanning segments follow: residues 9-29 (WIIPFIPLPVPILLGVGLLLF), 40-60 (WTFLSIFLLSIVMIFSLYLSI), 89-109 (IDPLTSIMSILITTVGILVLI), 125-145 (FAYMGFFNTSMLGLVTSSNLI), 147-167 (VYFFWELVGMCSYLLIGFWFT), 185-205 (GDFGLLLGILGLYWITGSFEF), 221-241 (VNLLFLTLCAFLLFVGPIAKS), 258-278 (TPISALIHAATMVAAGIFLVA), 280-300 (LLPLFIVIPSIMYIISLIGII), 327-347 (LGYMMLALGMGSYRSALFHLI), 354-374 (ALLFLGSGSIIHSMEAIVGYS), 396-416 (TAFLVGTLSLCGIPPLACFWS), 425-445 (LLFSPIFAIIACSTAGLTAFY), 547-567 (ILFPMLVLLLFTLFIGAIGIP), 608-628 (FSVSIAVFGIFIAYCLYKPFY), and 723-743 (YLFLYLSYVLIFLMILFFFYF).

The protein belongs to the complex I subunit 5 family. In terms of assembly, NDH is composed of at least 16 different subunits, 5 of which are encoded in the nucleus.

It localises to the plastid. The protein resides in the chloroplast thylakoid membrane. The catalysed reaction is a plastoquinone + NADH + (n+1) H(+)(in) = a plastoquinol + NAD(+) + n H(+)(out). It carries out the reaction a plastoquinone + NADPH + (n+1) H(+)(in) = a plastoquinol + NADP(+) + n H(+)(out). Functionally, NDH shuttles electrons from NAD(P)H:plastoquinone, via FMN and iron-sulfur (Fe-S) centers, to quinones in the photosynthetic chain and possibly in a chloroplast respiratory chain. The immediate electron acceptor for the enzyme in this species is believed to be plastoquinone. Couples the redox reaction to proton translocation, and thus conserves the redox energy in a proton gradient. The protein is NAD(P)H-quinone oxidoreductase subunit 5, chloroplastic (ndhF) of Crucihimalaya wallichii (Rock-cress).